A 128-amino-acid chain; its full sequence is Ribonuclease P protein component (128 aa).

This sequence belongs to the RnpA family. As to quaternary structure, consists of a catalytic RNA component (M1 or rnpB) and a protein subunit.

It catalyses the reaction Endonucleolytic cleavage of RNA, removing 5'-extranucleotides from tRNA precursor.. Its function is as follows. RNaseP catalyzes the removal of the 5'-leader sequence from pre-tRNA to produce the mature 5'-terminus. It can also cleave other RNA substrates such as 4.5S RNA. The protein component plays an auxiliary but essential role in vivo by binding to the 5'-leader sequence and broadening the substrate specificity of the ribozyme. The chain is Ribonuclease P protein component from Mycoplasma genitalium (strain ATCC 33530 / DSM 19775 / NCTC 10195 / G37) (Mycoplasmoides genitalium).